The following is a 117-amino-acid chain: Large ribosomal subunit protein uL18 (117 aa).

It belongs to the universal ribosomal protein uL18 family. As to quaternary structure, part of the 50S ribosomal subunit; part of the 5S rRNA/L5/L18/L25 subcomplex. Contacts the 5S and 23S rRNAs.

This is one of the proteins that bind and probably mediate the attachment of the 5S RNA into the large ribosomal subunit, where it forms part of the central protuberance. This chain is Large ribosomal subunit protein uL18, found in Pasteurella multocida (strain Pm70).